The primary structure comprises 227 residues: Thymidylate kinase (227 aa).

ATP is bound at residue 16–23; sequence GIDGAGKT.

It belongs to the thymidylate kinase family.

It catalyses the reaction dTMP + ATP = dTDP + ADP. In terms of biological role, phosphorylation of dTMP to form dTDP in both de novo and salvage pathways of dTTP synthesis. This Xanthomonas oryzae pv. oryzae (strain MAFF 311018) protein is Thymidylate kinase.